A 298-amino-acid polypeptide reads, in one-letter code: GTPase Era (298 aa).

One can recognise an Era-type G domain in the interval 3-170 (KSGFVAILGR…VQLLKDNLEE (168 aa)). Residues 11-18 (GRPNVGKS) form a G1 region. GTP is bound at residue 11-18 (GRPNVGKS). Positions 37-41 (QSTRN) are G2. The tract at residues 58 to 61 (DTPG) is G3. GTP is bound by residues 58 to 62 (DTPGI) and 120 to 123 (NKID). Positions 120 to 123 (NKID) are G4. Positions 149–151 (ISA) are G5. Residues 201–279 (TQQEVPHSVA…YLETWVKVKK (79 aa)) enclose the KH type-2 domain.

Belongs to the TRAFAC class TrmE-Era-EngA-EngB-Septin-like GTPase superfamily. Era GTPase family. As to quaternary structure, monomer.

Its subcellular location is the cytoplasm. It is found in the cell membrane. Functionally, an essential GTPase that binds both GDP and GTP, with rapid nucleotide exchange. Plays a role in 16S rRNA processing and 30S ribosomal subunit biogenesis and possibly also in cell cycle regulation and energy metabolism. This chain is GTPase Era, found in Streptococcus equi subsp. zooepidemicus (strain H70).